A 107-amino-acid chain; its full sequence is Early E3A 12.5 kDa protein (107 aa).

Belongs to the adenoviridae E3A-2 family.

The protein is Early E3A 12.5 kDa protein of Homo sapiens (Human).